We begin with the raw amino-acid sequence, 173 residues long: Ribosome maturation factor RimM (173 aa).

A PRC barrel domain is found at 92-165 (EGEFYHADLI…RVVIEAPAEI (74 aa)).

This sequence belongs to the RimM family. Binds ribosomal protein uS19.

It localises to the cytoplasm. In terms of biological role, an accessory protein needed during the final step in the assembly of 30S ribosomal subunit, possibly for assembly of the head region. Essential for efficient processing of 16S rRNA. May be needed both before and after RbfA during the maturation of 16S rRNA. It has affinity for free ribosomal 30S subunits but not for 70S ribosomes. The chain is Ribosome maturation factor RimM from Nitrobacter winogradskyi (strain ATCC 25391 / DSM 10237 / CIP 104748 / NCIMB 11846 / Nb-255).